A 176-amino-acid chain; its full sequence is MPEEIATLAGGCFWCTEAAFKLLRGVLEVVPGYAGGHVPHPTYEEVCTGTTGHREAVQVRFDPGVLPYADLLRYFFAVHDPTSEDRQGPDVGPQYSPAIFYHSEEQKRVAEAVMRELAPLYPKPIATKLLPFTTFYPAEAYHRDYFARHPEAPYCRLVIAPKLEKARKAFKSLLRP.

C12 is an active-site residue.

This sequence belongs to the MsrA Met sulfoxide reductase family.

It carries out the reaction L-methionyl-[protein] + [thioredoxin]-disulfide + H2O = L-methionyl-(S)-S-oxide-[protein] + [thioredoxin]-dithiol. The enzyme catalyses [thioredoxin]-disulfide + L-methionine + H2O = L-methionine (S)-S-oxide + [thioredoxin]-dithiol. Has an important function as a repair enzyme for proteins that have been inactivated by oxidation. Catalyzes the reversible oxidation-reduction of methionine sulfoxide in proteins to methionine. The chain is Peptide methionine sulfoxide reductase MsrA from Thermus thermophilus (strain ATCC BAA-163 / DSM 7039 / HB27).